The sequence spans 455 residues: GTPase Der (455 aa).

EngA-type G domains are found at residues P4 to D169 and I178 to R353. Residues G10–S17, D57–L61, N120–E123, G184–S191, D231–I235, and N296–D299 contribute to the GTP site. Residues R354–Q439 enclose the KH-like domain.

Belongs to the TRAFAC class TrmE-Era-EngA-EngB-Septin-like GTPase superfamily. EngA (Der) GTPase family. As to quaternary structure, associates with the 50S ribosomal subunit.

Its function is as follows. GTPase that plays an essential role in the late steps of ribosome biogenesis. This Synechococcus sp. (strain CC9605) protein is GTPase Der.